A 243-amino-acid chain; its full sequence is DNA repair protein RecO (243 aa).

It belongs to the RecO family.

In terms of biological role, involved in DNA repair and RecF pathway recombination. The polypeptide is DNA repair protein RecO (Xylella fastidiosa (strain M23)).